We begin with the raw amino-acid sequence, 177 residues long: MGIYDFQMKDAEGNAVDLSGYRGKVLLIVNTATRCGLTPQYEALQKLYAQYTAEGLEILDFPCNQFREQAPESSGEIAQVCMMKFGTKFKIFDKIEVNGANTAPLYAYLKSVKPQDKGNHLFKDFVLKLAALGEKRDEGDIKWNFTKFLVNRDGEVVERFAPSVTPEEIEADIRALL.

Cysteine 35 is a catalytic residue.

This sequence belongs to the glutathione peroxidase family.

In terms of biological role, important in the cellular metabolism or defense processes particular to this pathogen. The protein is Glutathione peroxidase homolog (gpxA) of Neisseria meningitidis serogroup A / serotype 4A (strain DSM 15465 / Z2491).